The primary structure comprises 541 residues: Sorting nexin-27 (541 aa).

Positions 1–42 (MADEDGEGIHPSAPHRNGGGGGGGGSGLHCAGNGGGGGGGPR) are disordered. The span at 17 to 41 (NGGGGGGGGSGLHCAGNGGGGGGGP) shows a compositional bias: gly residues. In terms of domain architecture, PDZ spans 43–136 (VVRIVKSESG…ELILTVLSVP (94 aa)). Residues serine 51 and serine 62 each carry the phosphoserine modification. The region spanning 161 to 269 (QAVPISVPRY…EFLSESDENY (109 aa)) is the PX domain. Positions 273–362 (SDVELRVALP…TCLTIRKWLF (90 aa)) constitute a Ras-associating domain. The tract at residues 273 to 362 (SDVELRVALP…TCLTIRKWLF (90 aa)) is FERM-like region F1. Positions 373–421 (NDLAVTYFFHQAVDDVKKGYIKAEEKSYQLQKLYEQRKMVMYLNMLRTC) are FERM-like region F2. The segment at 425–525 (NEIIFPHCAC…RVFCELKWRK (101 aa)) is FERM-like region F3.

Belongs to the sorting nexin family. In terms of assembly, core component of the SNX27-retromer, a multiprotein complex composed of SNX27, the WASH complex and the retromer complex. Interacts (via PDZ domain) with a number of target transmembrane proteins (via PDZ-binding motif): ABCC4, ADRB2, ARHGEF7, GRIA1, GRIA2, GRIN1, GRIN2A GRIN2C, KCNJ6, KCNJ9 and SLC2A1/GLUT1. Interacts (via the FERM-like regions) with the WASH complex. Interacts with SNX1. Interacts with CYTIP. Isoform 1 and isoform 2 directly interact with DGKZ. Isoform 1 and isoform 2 interact with HT4R isoform 5-HTA(A). Interacts with MCC. Interacts (via PDZ domains) with SLC9A3; directs SLC9A3 membrane insertion from early endosomes to the plasma membrane. As to expression, widely expressed. Expressed in cells of hematopoietic origin (at protein level).

It localises to the early endosome membrane. The protein resides in the cytoplasm. It is found in the cytosol. Involved in the retrograde transport from endosome to plasma membrane, a trafficking pathway that promotes the recycling of internalized transmembrane proteins. Following internalization, endocytosed transmembrane proteins are delivered to early endosomes and recycled to the plasma membrane instead of being degraded in lysosomes. SNX27 specifically binds and directs sorting of a subset of transmembrane proteins containing a PDZ-binding motif at the C-terminus: following interaction with target transmembrane proteins, associates with the retromer complex, preventing entry into the lysosomal pathway, and promotes retromer-tubule based plasma membrane recycling. SNX27 also binds with the WASH complex. Interacts with membranes containing phosphatidylinositol-3-phosphate (PtdIns(3P)). May participate in establishment of natural killer cell polarity. Recruits CYTIP to early endosomes. This is Sorting nexin-27 (SNX27) from Homo sapiens (Human).